The chain runs to 333 residues: Receptor polysaccharide phosphotransferase WefC (333 aa).

It belongs to the stealth family.

Functionally, part of the type 2Gn receptor polysaccharide (RPS) biosynthesis locus. Essential for cell surface RPS production, and for synthesis of the host-like GalNAc beta 1-3Gal (Gn) motif of the RPS. Probably encodes a 1-3Gal alpha transferase. The sequence is that of Receptor polysaccharide phosphotransferase WefC (wefC) from Streptococcus gordonii.